Here is a 419-residue protein sequence, read N- to C-terminus: UDP-N-acetylglucosamine 1-carboxyvinyltransferase (419 aa).

Residue 22 to 23 (KN) coordinates phosphoenolpyruvate. Position 95 (Arg-95) interacts with UDP-N-acetyl-alpha-D-glucosamine. Cys-119 acts as the Proton donor in catalysis. Residue Cys-119 is modified to 2-(S-cysteinyl)pyruvic acid O-phosphothioketal. UDP-N-acetyl-alpha-D-glucosamine is bound by residues 164–167 (KVSV), Asp-308, and Ile-330.

It belongs to the EPSP synthase family. MurA subfamily.

The protein resides in the cytoplasm. It catalyses the reaction phosphoenolpyruvate + UDP-N-acetyl-alpha-D-glucosamine = UDP-N-acetyl-3-O-(1-carboxyvinyl)-alpha-D-glucosamine + phosphate. It participates in cell wall biogenesis; peptidoglycan biosynthesis. Its function is as follows. Cell wall formation. Adds enolpyruvyl to UDP-N-acetylglucosamine. The polypeptide is UDP-N-acetylglucosamine 1-carboxyvinyltransferase (Rickettsia canadensis (strain McKiel)).